A 91-amino-acid polypeptide reads, in one-letter code: Large ribosomal subunit protein bL27 (91 aa).

Residues 1 to 21 (MAHKKAGGSSRNGRDSESKRL) form a disordered region.

This sequence belongs to the bacterial ribosomal protein bL27 family.

In Azoarcus sp. (strain BH72), this protein is Large ribosomal subunit protein bL27.